A 192-amino-acid polypeptide reads, in one-letter code: Thymidine kinase (192 aa).

ATP contacts are provided by residues 9 to 16 (SAMNAGKS) and 87 to 90 (DECQ). E88 serves as the catalytic Proton acceptor. The Zn(2+) site is built by C145, C147, C182, and H185.

It belongs to the thymidine kinase family. As to quaternary structure, homotetramer.

Its subcellular location is the cytoplasm. The enzyme catalyses thymidine + ATP = dTMP + ADP + H(+). The protein is Thymidine kinase of Photobacterium profundum (strain SS9).